The primary structure comprises 130 residues: Protachykinin-1 (130 aa).

The first 19 residues, 1-19, serve as a signal peptide directing secretion; sequence MKILVAVAVIFFISTQLSA. A propeptide spanning residues 20–56 is cleaved from the precursor; sequence EEIGANDDFNYWSDWSDSDQIKEEMPEPFEHLLQRIA. Methionine amide is present on residues Met68 and Met107.

Belongs to the tachykinin family. Post-translationally, the substance P form is cleaved at Pro-59 by the prolyl endopeptidase FAP (seprase) activity (in vitro). Substance P is also cleaved and degraded by Angiotensin-converting enzyme (ACE) and neprilysin (MME).

The protein localises to the secreted. Functionally, tachykinins are active peptides which excite neurons, evoke behavioral responses, are potent vasodilators and secretagogues, and contract (directly or indirectly) many smooth muscles. In Bos taurus (Bovine), this protein is Protachykinin-1 (TAC1).